Reading from the N-terminus, the 442-residue chain is tRNA-2-methylthio-N(6)-dimethylallyladenosine synthase (442 aa).

In terms of domain architecture, MTTase N-terminal spans 5 to 122 (KKVFIKTLGC…LPEMIKQKQK (118 aa)). [4Fe-4S] cluster contacts are provided by cysteine 14, cysteine 51, cysteine 85, cysteine 159, cysteine 163, and cysteine 166. Residues 145–378 (KAEGAKAYVS…DLLNSNAQII (234 aa)) form the Radical SAM core domain. The 63-residue stretch at 380–442 (RQMVGTNQRI…LPNSLRGELI (63 aa)) folds into the TRAM domain.

The protein belongs to the methylthiotransferase family. MiaB subfamily. In terms of assembly, monomer. It depends on [4Fe-4S] cluster as a cofactor.

The protein localises to the cytoplasm. It catalyses the reaction N(6)-dimethylallyladenosine(37) in tRNA + (sulfur carrier)-SH + AH2 + 2 S-adenosyl-L-methionine = 2-methylsulfanyl-N(6)-dimethylallyladenosine(37) in tRNA + (sulfur carrier)-H + 5'-deoxyadenosine + L-methionine + A + S-adenosyl-L-homocysteine + 2 H(+). In terms of biological role, catalyzes the methylthiolation of N6-(dimethylallyl)adenosine (i(6)A), leading to the formation of 2-methylthio-N6-(dimethylallyl)adenosine (ms(2)i(6)A) at position 37 in tRNAs that read codons beginning with uridine. The polypeptide is tRNA-2-methylthio-N(6)-dimethylallyladenosine synthase (Francisella tularensis subsp. tularensis (strain FSC 198)).